The chain runs to 278 residues: Phosphatidylglycerol--prolipoprotein diacylglyceryl transferase (278 aa).

Helical transmembrane passes span 21-41 (WYGI…QASV), 54-74 (IIFW…VIFQ), and 88-108 (IWHG…TGII). Position 136 (Arg136) interacts with a 1,2-diacyl-sn-glycero-3-phospho-(1'-sn-glycerol). 2 helical membrane passes run 176 to 196 (QPTF…LILL) and 234 to 254 (IRVA…IMII).

This sequence belongs to the Lgt family.

The protein localises to the cell membrane. The enzyme catalyses L-cysteinyl-[prolipoprotein] + a 1,2-diacyl-sn-glycero-3-phospho-(1'-sn-glycerol) = an S-1,2-diacyl-sn-glyceryl-L-cysteinyl-[prolipoprotein] + sn-glycerol 1-phosphate + H(+). It functions in the pathway protein modification; lipoprotein biosynthesis (diacylglyceryl transfer). Functionally, catalyzes the transfer of the diacylglyceryl group from phosphatidylglycerol to the sulfhydryl group of the N-terminal cysteine of a prolipoprotein, the first step in the formation of mature lipoproteins. The sequence is that of Phosphatidylglycerol--prolipoprotein diacylglyceryl transferase from Staphylococcus xylosus.